A 407-amino-acid chain; its full sequence is 1-deoxy-D-xylulose 5-phosphate reductoisomerase (407 aa).

NADPH contacts are provided by Thr-27, Gly-28, Ser-29, Ile-30, Ala-53, Arg-54, Asn-55, and Asn-140. Lys-141 provides a ligand contact to 1-deoxy-D-xylulose 5-phosphate. Position 142 (Glu-142) interacts with NADPH. Asp-166 is a binding site for Mn(2+). Ser-167, Glu-168, Ser-192, and His-215 together coordinate 1-deoxy-D-xylulose 5-phosphate. Mn(2+) is bound at residue Glu-168. Position 221 (Gly-221) interacts with NADPH. 4 residues coordinate 1-deoxy-D-xylulose 5-phosphate: Ser-228, Asn-233, Lys-234, and Glu-237. Residue Glu-237 coordinates Mn(2+).

It belongs to the DXR family. Mg(2+) is required as a cofactor. Requires Mn(2+) as cofactor.

The enzyme catalyses 2-C-methyl-D-erythritol 4-phosphate + NADP(+) = 1-deoxy-D-xylulose 5-phosphate + NADPH + H(+). The protein operates within isoprenoid biosynthesis; isopentenyl diphosphate biosynthesis via DXP pathway; isopentenyl diphosphate from 1-deoxy-D-xylulose 5-phosphate: step 1/6. In terms of biological role, catalyzes the NADPH-dependent rearrangement and reduction of 1-deoxy-D-xylulose-5-phosphate (DXP) to 2-C-methyl-D-erythritol 4-phosphate (MEP). This is 1-deoxy-D-xylulose 5-phosphate reductoisomerase from Oleidesulfovibrio alaskensis (strain ATCC BAA-1058 / DSM 17464 / G20) (Desulfovibrio alaskensis).